Consider the following 485-residue polypeptide: Glutamyl-tRNA(Gln) amidotransferase subunit A (485 aa).

Active-site charge relay system residues include lysine 79 and serine 154. Catalysis depends on serine 178, which acts as the Acyl-ester intermediate.

The protein belongs to the amidase family. GatA subfamily. In terms of assembly, heterotrimer of A, B and C subunits.

The catalysed reaction is L-glutamyl-tRNA(Gln) + L-glutamine + ATP + H2O = L-glutaminyl-tRNA(Gln) + L-glutamate + ADP + phosphate + H(+). In terms of biological role, allows the formation of correctly charged Gln-tRNA(Gln) through the transamidation of misacylated Glu-tRNA(Gln) in organisms which lack glutaminyl-tRNA synthetase. The reaction takes place in the presence of glutamine and ATP through an activated gamma-phospho-Glu-tRNA(Gln). The protein is Glutamyl-tRNA(Gln) amidotransferase subunit A of Staphylococcus epidermidis (strain ATCC 35984 / DSM 28319 / BCRC 17069 / CCUG 31568 / BM 3577 / RP62A).